The chain runs to 213 residues: MOB kinase activator-like 1 homolog A (213 aa).

Residues cysteine 77, cysteine 82, histidine 159, and histidine 164 each contribute to the Zn(2+) site.

It belongs to the MOB1/phocein family.

This chain is MOB kinase activator-like 1 homolog A (mobA), found in Dictyostelium discoideum (Social amoeba).